The primary structure comprises 461 residues: Probable metabolite transport protein CsbC (461 aa).

Over methionine 1–glycine 14 the chain is Cytoplasmic. The helical transmembrane segment at alanine 15–isoleucine 35 threads the bilayer. Topologically, residues asparagine 36 to aspartate 38 are extracellular. The chain crosses the membrane as a helical span at residues isoleucine 39–phenylalanine 59. At glycine 60–valine 76 the chain is on the cytoplasmic side. Residues valine 77–isoleucine 97 form a helical membrane-spanning segment. At glycine 98–arginine 104 the chain is on the extracellular side. Residues valine 105–methionine 125 form a helical membrane-spanning segment. The Cytoplasmic portion of the chain corresponds to alanine 126–asparagine 139. A helical transmembrane segment spans residues leucine 140 to glutamate 160. Residues alanine 161 to arginine 163 lie on the Extracellular side of the membrane. The chain crosses the membrane as a helical span at residues tryptophan 164–proline 184. Over glutamate 185 to proline 241 the chain is Cytoplasmic. Residues methionine 242 to isoleucine 262 form a helical membrane-spanning segment. Residues tyrosine 263–alanine 280 are Extracellular-facing. A helical membrane pass occupies residues leucine 281 to isoleucine 301. At aspartate 302–lysine 308 the chain is on the cytoplasmic side. A helical membrane pass occupies residues leucine 309–leucine 329. The Extracellular segment spans residues threonine 330–threonine 341. The chain crosses the membrane as a helical span at residues valine 342–valine 362. Over leucine 363–glycine 378 the chain is Cytoplasmic. The chain crosses the membrane as a helical span at residues phenylalanine 379 to leucine 399. The Extracellular portion of the chain corresponds to serine 400–methionine 402. A helical membrane pass occupies residues glycine 403 to phenylalanine 423. Residues tyrosine 424–leucine 461 are Cytoplasmic-facing.

This sequence belongs to the major facilitator superfamily. Sugar transporter (TC 2.A.1.1) family.

The protein resides in the cell membrane. Could serve either a nutritional or an osmotic protection function. The polypeptide is Probable metabolite transport protein CsbC (csbC) (Bacillus subtilis (strain 168)).